A 156-amino-acid chain; its full sequence is Snaclec A10 (156 aa).

The signal sequence occupies residues 1-23 (MGRSISVSFGLLVVFLSLSGIGA). 3 cysteine pairs are disulfide-bonded: cysteine 27-cysteine 38, cysteine 55-cysteine 154, and cysteine 129-cysteine 146. The 122-residue stretch at 34–155 (YDQHCYQAVD…CGQPYRFTCE (122 aa)) folds into the C-type lectin domain.

This sequence belongs to the snaclec family. In terms of assembly, heterodimer; disulfide-linked. Expressed by the venom gland.

It is found in the secreted. Its function is as follows. Interferes with one step of hemostasis (modulation of platelet aggregation, or coagulation cascade, for example). The protein is Snaclec A10 of Macrovipera lebetinus (Levantine viper).